The sequence spans 176 residues: NAD(P)H-quinone oxidoreductase subunit 6, chloroplastic (176 aa).

5 helical membrane-spanning segments follow: residues 10–30 (FLLVFLGSGLLVGGLGVVLLP), 32–52 (PIFSAFSLGFVLVCISLLYIL), 61–81 (AQLLIYVGAINVLIIFAVMFM), 92–112 (LWTVGNGITSLVCTTILFLLM), and 152–172 (FFLPFELISIILLVALIGAIS).

It belongs to the complex I subunit 6 family. As to quaternary structure, NDH is composed of at least 16 different subunits, 5 of which are encoded in the nucleus.

It is found in the plastid. The protein localises to the chloroplast thylakoid membrane. The catalysed reaction is a plastoquinone + NADH + (n+1) H(+)(in) = a plastoquinol + NAD(+) + n H(+)(out). It catalyses the reaction a plastoquinone + NADPH + (n+1) H(+)(in) = a plastoquinol + NADP(+) + n H(+)(out). In terms of biological role, NDH shuttles electrons from NAD(P)H:plastoquinone, via FMN and iron-sulfur (Fe-S) centers, to quinones in the photosynthetic chain and possibly in a chloroplast respiratory chain. The immediate electron acceptor for the enzyme in this species is believed to be plastoquinone. Couples the redox reaction to proton translocation, and thus conserves the redox energy in a proton gradient. In Capsella bursa-pastoris (Shepherd's purse), this protein is NAD(P)H-quinone oxidoreductase subunit 6, chloroplastic (ndhG).